The chain runs to 932 residues: MIRSSIKNKITTTKSLSCISLINRQYGTSTKEVRETFLNYFEKNGHKRLPSGSLLPYNDNSLLFTNAGMVQFKNQFTGNEESKYKKVTTSQKCVRAGGKHNDLDNVGYTARHHTFFEMLGNFSFGGYNHFKRDSIQHAWDLLTKEYGLPKERLAISVLEGDEESAEIWRNQIGLPNDKIMYKGREDNFWSMGDGPGPCGPCSEIFWDHGKEVDGERYLEIWNLVFMQYNKSGKEGDEMPVDKLPIPCVDTGMGLERMASVLQGKFTNYDIDLFQNLINSFKEIVTMDVGRAQFQLQQDPQRVETAYRVIADHLRSISFLISDGVIPFNIGRGYVLRKIIRRALSYGKILGFNGPFLSTLFPLLEREMGDIYPQLIERSNEIRNVILNEEGTFYNAIQRGIPYLEEFVQQNKLNEESLFLLYNTYGLPLEMSQVKAKQNNIEIDMDKVNKLIDETREQSRLTWNTSSSSSDQTTQQTTQLPEKTFLSWKSDNIKPKFIGYNGCVENDNSKVLRSHFDNDSHLVYLSLDETPFYGTSGGQVGDVGELINVSSGKNVYRVINTIKPYEGGLVLVVEWDPSQQLASQVYQDLKQDSLLNCRVDRSIRNQVAVHHSATHLLHAALRNVIGKSVVQAGSLVGSESLRFDFTHGQKLTPNQIEQIEQWVNDAIAKDIALNTDEIPYEQASKNSDTLQLFSEKYSELVRVVSIPGFSKELCGGTHVERSSSIHQFKIISESSVAAGTRRIEAVAGLAATNFFKNHYQLVHQLSNSINSPIVNFQQSFERLVNTNSKQEKEIFDLKLKIAQLSSVNYNGQYKSDNGGEMIPLSLHIIDCEDKKAFTKVTENFAKEFSSSPIQLTISKGGKVLCQLLSSSSSSSSSLSADTVLKQLFKSIGMGKGGGNKLMANASIQPLNNEILNSILNWSNVNNNYNNKKN.

Residues 458 to 480 (SRLTWNTSSSSSDQTTQQTTQLP) form a disordered region. Over residues 464–478 (TSSSSSDQTTQQTTQ) the composition is skewed to low complexity. Positions 610, 614, 713, and 717 each coordinate Zn(2+).

This sequence belongs to the class-II aminoacyl-tRNA synthetase family. As to quaternary structure, monomer. Requires Zn(2+) as cofactor.

It localises to the mitochondrion. It carries out the reaction tRNA(Ala) + L-alanine + ATP = L-alanyl-tRNA(Ala) + AMP + diphosphate. Its function is as follows. Catalyzes the attachment of alanine to tRNA(Ala) in a two-step reaction: alanine is first activated by ATP to form Ala-AMP and then transferred to the acceptor end of tRNA(Ala). Also edits incorrectly charged tRNA(Ala) via its editing domain. This chain is Alanine--tRNA ligase, mitochondrial (malaS), found in Dictyostelium discoideum (Social amoeba).